A 182-amino-acid polypeptide reads, in one-letter code: ATP-dependent protease subunit HslV (182 aa).

Residue Thr-6 is part of the active site. The Na(+) site is built by Ala-164, Cys-167, and Thr-170.

It belongs to the peptidase T1B family. HslV subfamily. In terms of assembly, a double ring-shaped homohexamer of HslV is capped on each side by a ring-shaped HslU homohexamer. The assembly of the HslU/HslV complex is dependent on binding of ATP.

It localises to the cytoplasm. The catalysed reaction is ATP-dependent cleavage of peptide bonds with broad specificity.. Its activity is regulated as follows. Allosterically activated by HslU binding. In terms of biological role, protease subunit of a proteasome-like degradation complex believed to be a general protein degrading machinery. This Borreliella burgdorferi (strain ATCC 35210 / DSM 4680 / CIP 102532 / B31) (Borrelia burgdorferi) protein is ATP-dependent protease subunit HslV.